A 381-amino-acid chain; its full sequence is Cytochrome b (381 aa).

Transmembrane regions (helical) follow at residues 34–54 (FGSLLGICLITPILTGVMLAM), 78–99 (WMIRNLHANGASFFFICIYLHI), 114–134 (WNTGIILLLTLMATAFVGYVL), and 179–199 (FFALHFLLPFLIAGISIVHLT). The heme b site is built by histidine 84 and histidine 98. Heme b-binding residues include histidine 183 and histidine 197. Histidine 202 provides a ligand contact to a ubiquinone. The next 4 helical transmembrane spans lie at 227-247 (MKDLLGFTLLSLPFLALAFFT), 289-309 (LGGVLALAASVLILFTIPLLH), 321-341 (MSQILFWLLVANLFILTWVGS), and 348-368 (FIIIGQLASLSYFTILLFLFP).

It belongs to the cytochrome b family. As to quaternary structure, the cytochrome bc1 complex contains 11 subunits: 3 respiratory subunits (MT-CYB, CYC1 and UQCRFS1), 2 core proteins (UQCRC1 and UQCRC2) and 6 low-molecular weight proteins (UQCRH/QCR6, UQCRB/QCR7, UQCRQ/QCR8, UQCR10/QCR9, UQCR11/QCR10 and a cleavage product of UQCRFS1). This cytochrome bc1 complex then forms a dimer. Heme b serves as cofactor.

Its subcellular location is the mitochondrion inner membrane. In terms of biological role, component of the ubiquinol-cytochrome c reductase complex (complex III or cytochrome b-c1 complex) that is part of the mitochondrial respiratory chain. The b-c1 complex mediates electron transfer from ubiquinol to cytochrome c. Contributes to the generation of a proton gradient across the mitochondrial membrane that is then used for ATP synthesis. The chain is Cytochrome b (MT-CYB) from Nothoprocta perdicaria (Chilean tinamou).